We begin with the raw amino-acid sequence, 155 residues long: SsrA-binding protein (155 aa).

Belongs to the SmpB family.

The protein resides in the cytoplasm. Required for rescue of stalled ribosomes mediated by trans-translation. Binds to transfer-messenger RNA (tmRNA), required for stable association of tmRNA with ribosomes. tmRNA and SmpB together mimic tRNA shape, replacing the anticodon stem-loop with SmpB. tmRNA is encoded by the ssrA gene; the 2 termini fold to resemble tRNA(Ala) and it encodes a 'tag peptide', a short internal open reading frame. During trans-translation Ala-aminoacylated tmRNA acts like a tRNA, entering the A-site of stalled ribosomes, displacing the stalled mRNA. The ribosome then switches to translate the ORF on the tmRNA; the nascent peptide is terminated with the 'tag peptide' encoded by the tmRNA and targeted for degradation. The ribosome is freed to recommence translation, which seems to be the essential function of trans-translation. This Streptococcus pyogenes serotype M5 (strain Manfredo) protein is SsrA-binding protein.